Consider the following 432-residue polypeptide: Adenylosuccinate synthetase (432 aa).

Residues 13-19 (GDEGKGK) and 41-43 (GHT) each bind GTP. Residue aspartate 14 is the Proton acceptor of the active site. Residues aspartate 14 and glycine 41 each contribute to the Mg(2+) site. IMP is bound by residues 14–17 (DEGK), 39–42 (NAGH), threonine 130, arginine 144, glutamine 225, threonine 240, and arginine 304. Histidine 42 serves as the catalytic Proton donor. Residue 300 to 306 (AVTGRPR) participates in substrate binding. GTP contacts are provided by residues arginine 306, 332-334 (KLD), and 415-417 (STG).

The protein belongs to the adenylosuccinate synthetase family. As to quaternary structure, homodimer. Requires Mg(2+) as cofactor.

It localises to the cytoplasm. It catalyses the reaction IMP + L-aspartate + GTP = N(6)-(1,2-dicarboxyethyl)-AMP + GDP + phosphate + 2 H(+). Its pathway is purine metabolism; AMP biosynthesis via de novo pathway; AMP from IMP: step 1/2. Its function is as follows. Plays an important role in the de novo pathway of purine nucleotide biosynthesis. Catalyzes the first committed step in the biosynthesis of AMP from IMP. The sequence is that of Adenylosuccinate synthetase from Haemophilus influenzae (strain PittEE).